The following is a 337-amino-acid chain: RNA 3'-terminal phosphate cyclase (337 aa).

Residues Q101 and 282–285 (HMSD) contribute to the ATP site. Catalysis depends on H306, which acts as the Tele-AMP-histidine intermediate.

This sequence belongs to the RNA 3'-terminal cyclase family. Type 1 subfamily.

The protein resides in the cytoplasm. It carries out the reaction a 3'-end 3'-phospho-ribonucleotide-RNA + ATP = a 3'-end 2',3'-cyclophospho-ribonucleotide-RNA + AMP + diphosphate. In terms of biological role, catalyzes the conversion of 3'-phosphate to a 2',3'-cyclic phosphodiester at the end of RNA. The mechanism of action of the enzyme occurs in 3 steps: (A) adenylation of the enzyme by ATP; (B) transfer of adenylate to an RNA-N3'P to produce RNA-N3'PP5'A; (C) and attack of the adjacent 2'-hydroxyl on the 3'-phosphorus in the diester linkage to produce the cyclic end product. The biological role of this enzyme is unknown but it is likely to function in some aspects of cellular RNA processing. This chain is RNA 3'-terminal phosphate cyclase, found in Saccharolobus islandicus (strain M.16.4 / Kamchatka #3) (Sulfolobus islandicus).